The following is a 208-amino-acid chain: Small ribosomal subunit protein uS4 (208 aa).

An S4 RNA-binding domain is found at 95-157 (RRIDNIVYRA…DSLKKLVRSN (63 aa)).

This sequence belongs to the universal ribosomal protein uS4 family. Part of the 30S ribosomal subunit. Contacts protein S5. The interaction surface between S4 and S5 is involved in control of translational fidelity.

One of the primary rRNA binding proteins, it binds directly to 16S rRNA where it nucleates assembly of the body of the 30S subunit. Its function is as follows. With S5 and S12 plays an important role in translational accuracy. This Borrelia duttonii (strain Ly) protein is Small ribosomal subunit protein uS4.